Consider the following 203-residue polypeptide: Dual-action ribosomal maturation protein DarP (203 aa).

Disordered regions lie at residues 1–31 (MTRKTRIQTIESAEPEVDENGYDRPSKSQLK) and 178–203 (NADGPPAQTDSEADDAQDDEDDDRDA). Over residues 21 to 31 (GYDRPSKSQLK) the composition is skewed to basic and acidic residues. The segment covering 188–203 (SEADDAQDDEDDDRDA) has biased composition (acidic residues).

Belongs to the DarP family.

It localises to the cytoplasm. In terms of biological role, member of a network of 50S ribosomal subunit biogenesis factors which assembles along the 30S-50S interface, preventing incorrect 23S rRNA structures from forming. Promotes peptidyl transferase center (PTC) maturation. The sequence is that of Dual-action ribosomal maturation protein DarP from Paraburkholderia xenovorans (strain LB400).